The chain runs to 456 residues: Bifunctional protein GlmU (456 aa).

Residues 1–228 (MKLKAIILAA…YEDIMAVNSR (228 aa)) form a pyrophosphorylase region. UDP-N-acetyl-alpha-D-glucosamine is bound by residues 8–11 (LAAG), Lys-22, Gln-72, 77–78 (GT), 99–101 (YGD), Gly-138, Glu-153, Asn-168, and Asn-226. Asp-101 provides a ligand contact to Mg(2+). Asn-226 is a Mg(2+) binding site. The tract at residues 229-249 (EQLAEVEEVMQRRIVKKHMEA) is linker. An N-acetyltransferase region spans residues 250–456 (GVTFIDPQST…WVARKGVGKK (207 aa)). The UDP-N-acetyl-alpha-D-glucosamine site is built by Arg-331 and Lys-349. The active-site Proton acceptor is the His-361. UDP-N-acetyl-alpha-D-glucosamine-binding residues include Tyr-364 and Asn-375. Residues 384-385 (NY), Ser-403, Ser-421, and Arg-438 each bind acetyl-CoA.

In the N-terminal section; belongs to the N-acetylglucosamine-1-phosphate uridyltransferase family. This sequence in the C-terminal section; belongs to the transferase hexapeptide repeat family. In terms of assembly, homotrimer. It depends on Mg(2+) as a cofactor.

It is found in the cytoplasm. The catalysed reaction is alpha-D-glucosamine 1-phosphate + acetyl-CoA = N-acetyl-alpha-D-glucosamine 1-phosphate + CoA + H(+). It catalyses the reaction N-acetyl-alpha-D-glucosamine 1-phosphate + UTP + H(+) = UDP-N-acetyl-alpha-D-glucosamine + diphosphate. It functions in the pathway nucleotide-sugar biosynthesis; UDP-N-acetyl-alpha-D-glucosamine biosynthesis; N-acetyl-alpha-D-glucosamine 1-phosphate from alpha-D-glucosamine 6-phosphate (route II): step 2/2. It participates in nucleotide-sugar biosynthesis; UDP-N-acetyl-alpha-D-glucosamine biosynthesis; UDP-N-acetyl-alpha-D-glucosamine from N-acetyl-alpha-D-glucosamine 1-phosphate: step 1/1. Its pathway is bacterial outer membrane biogenesis; LPS lipid A biosynthesis. Its function is as follows. Catalyzes the last two sequential reactions in the de novo biosynthetic pathway for UDP-N-acetylglucosamine (UDP-GlcNAc). The C-terminal domain catalyzes the transfer of acetyl group from acetyl coenzyme A to glucosamine-1-phosphate (GlcN-1-P) to produce N-acetylglucosamine-1-phosphate (GlcNAc-1-P), which is converted into UDP-GlcNAc by the transfer of uridine 5-monophosphate (from uridine 5-triphosphate), a reaction catalyzed by the N-terminal domain. This is Bifunctional protein GlmU from Alkaliphilus metalliredigens (strain QYMF).